The following is a 446-amino-acid chain: MSNTVFIGAKEYFPGIGKIGFEGRDSDNPLAFKVYDANKQVAGKTMAEHLRFAVAYWHSFCGNGADPFGPGTRAYPWDVGNTALARAEAKSDAAFEFFTKLGVPYYCFHDIDLAPDADDIGEYENNLKHMVGIAKQRQADTGVKLLWGTANLFSHPRYMNGASTNPDFNVVARAAVQVKAAIDATVELGGENYVFWGGREGYACLHNTQMKREQDNMARFLTLARDYGRAIGFKGNFLIEPKPMEPMKHQYDFDSATVIGFLRQHGLDQDFKLNIEANHATLSGHSFEHDLQVASDAGLLGSIDANRGNPQNGWDTDQFPTDLYDTVGAMLVVLRQGGLAPGGLNFDAKVRRESSDPQDLFLAHIGGMDAFARGLEVADALLTSSPLETWRAQRYASFDSGAGADFANGTSTLADLATYAAGKGEPTQLSGRQEAYENLINQYLTR.

Catalysis depends on residues His-109 and Asp-112. Residues Glu-240, Glu-276, His-279, Asp-304, Asp-315, Asp-317, and Asp-347 each contribute to the Mg(2+) site.

This sequence belongs to the xylose isomerase family. In terms of assembly, homotetramer. Requires Mg(2+) as cofactor.

The protein localises to the cytoplasm. It carries out the reaction alpha-D-xylose = alpha-D-xylulofuranose. The chain is Xylose isomerase 2 from Xanthomonas campestris pv. campestris (strain 8004).